The sequence spans 57 residues: Cold shock protein CspB (57 aa).

A CSD domain is found at 1 to 57 (IKWFNSEKGFGFIEVEGQDDVFVHFSAIQGEGFKCLEEGQAVSFEIVEGNRGPQAAN).

In terms of assembly, homodimer.

The protein localises to the cytoplasm. Affects cell viability at low temperatures. The protein is Cold shock protein CspB (cspB) of Sporosarcina globispora (Bacillus globisporus).